A 721-amino-acid polypeptide reads, in one-letter code: MRKILKLKIGRDELVFETGFMAKQANGSVLATYGGSSVLATVCCSNNVREDLDFVPLSVEYNEKYYAAGKIPGGFIKREGKPKDKEILVSRLIDRPMRPLFDKRFGREIQVIPTTLATDQLNPPDIVGMNAAFTAVFLSDIPFNGPIAAVRMVYLNGKFIVNPSFEEIHDSDLDIVVAGSLNGITMVEGGANEVSEDILLSAIDGAHEYIKQICNAQKEFLDIVGEKEKLPLAFEEKIFEFKEELKDFIYTDLKEACFVKGKLNRDKAITLLRNKSYEHFSSLEKLTDSNESLFYKAFDDFEREIVRNSILNDKIRTDGRTPNEIRDIIAEVDILSRTHGSALFTRGETQALAVTTLGTSIDEQIMDDIDGDKRLNFMLHYNFPPFSVGETGRLMTGRREIGHGHLAQRALESMVPGKNDFPYTIRVVSEILESNGSSSMATVCAGSMSLMSAGVPVKRQVAGIAMGLISEGDKYVVLSDILGEEDHLGDMDFKVAGTKNGITGFQMDIKIENVTKHLMRDALEQARIGRMHILSVMDTVISDSRVGISKYAPKIVQLQIDIDKISLVIGSTGKTVKAITDEFEVKVQIEQNGKIILFGDDDFKMQKAKERIESIVREPKVGEIYEGIVKKINSFGAFIELTPTKEGFLSTRLKSRDNKYGSGRFGTGNRYPRFGGGDNIRGNVGLVRPPKLEEGQQIKVKIIDIDKFGKIDLEVVRDKDY.

Positions 486 and 492 each coordinate Mg(2+). The KH domain occupies 553 to 612; that stretch reads PKIVQLQIDIDKISLVIGSTGKTVKAITDEFEVKVQIEQNGKIILFGDDDFKMQKAKERI. The S1 motif domain occupies 622–716; sequence GEIYEGIVKK…KFGKIDLEVV (95 aa).

This sequence belongs to the polyribonucleotide nucleotidyltransferase family. The cofactor is Mg(2+).

Its subcellular location is the cytoplasm. It catalyses the reaction RNA(n+1) + phosphate = RNA(n) + a ribonucleoside 5'-diphosphate. In terms of biological role, involved in mRNA degradation. Catalyzes the phosphorolysis of single-stranded polyribonucleotides processively in the 3'- to 5'-direction. The polypeptide is Polyribonucleotide nucleotidyltransferase (Borrelia garinii subsp. bavariensis (strain ATCC BAA-2496 / DSM 23469 / PBi) (Borreliella bavariensis)).